Reading from the N-terminus, the 338-residue chain is Transcription factor GRA2 (338 aa).

Disordered regions lie at residues 171 to 230 (CQDS…PHYA) and 256 to 277 (TQHE…DGGS). Polar residues predominate over residues 174-203 (SGVSQPSNLADDTLGQGQPVSTVVQPQHPG). The interval 223 to 236 (KRQRPHYAIEKRYR) is basic motif. The region spanning 223-303 (KRQRPHYAIE…NQATLCIRQL (81 aa)) is the bHLH domain. Residues 237 to 303 (AGLQERFEAL…NQATLCIRQL (67 aa)) form a helix-loop-helix motif region.

The protein resides in the nucleus. In terms of biological role, transcription factor that specifically regulates the expression of the gene cluster that mediates the biosynthesis of gramillins A and B, bicyclic lipopeptides that induce cell death in maize leaves but not in wheat leaves. The polypeptide is Transcription factor GRA2 (GRA2) (Gibberella zeae (strain ATCC MYA-4620 / CBS 123657 / FGSC 9075 / NRRL 31084 / PH-1) (Wheat head blight fungus)).